We begin with the raw amino-acid sequence, 195 residues long: Large ribosomal subunit protein uL5 (195 aa).

The protein belongs to the universal ribosomal protein uL5 family. In terms of assembly, part of the 50S ribosomal subunit; part of the 5S rRNA/L5/L18/L25 subcomplex. Contacts the 5S rRNA and the P site tRNA. Forms a bridge to the 30S subunit in the 70S ribosome.

Its function is as follows. This is one of the proteins that bind and probably mediate the attachment of the 5S RNA into the large ribosomal subunit, where it forms part of the central protuberance. In the 70S ribosome it contacts protein S13 of the 30S subunit (bridge B1b), connecting the 2 subunits; this bridge is implicated in subunit movement. Contacts the P site tRNA; the 5S rRNA and some of its associated proteins might help stabilize positioning of ribosome-bound tRNAs. The chain is Large ribosomal subunit protein uL5 from Pelodictyon phaeoclathratiforme (strain DSM 5477 / BU-1).